The chain runs to 177 residues: Large ribosomal subunit protein uL10 (177 aa).

It belongs to the universal ribosomal protein uL10 family. Part of the ribosomal stalk of the 50S ribosomal subunit. The N-terminus interacts with L11 and the large rRNA to form the base of the stalk. The C-terminus forms an elongated spine to which L12 dimers bind in a sequential fashion forming a multimeric L10(L12)X complex.

Functionally, forms part of the ribosomal stalk, playing a central role in the interaction of the ribosome with GTP-bound translation factors. The polypeptide is Large ribosomal subunit protein uL10 (Kocuria rhizophila (strain ATCC 9341 / DSM 348 / NBRC 103217 / DC2201)).